A 203-amino-acid chain; its full sequence is Outer-membrane lipoprotein LolB (203 aa).

Positions 1-21 (MRLSASLFHIALVTVLLVLAG) are cleaved as a signal peptide. The N-palmitoyl cysteine moiety is linked to residue Cys22. The S-diacylglycerol cysteine moiety is linked to residue Cys22.

It belongs to the LolB family. As to quaternary structure, monomer.

The protein resides in the cell outer membrane. In terms of biological role, plays a critical role in the incorporation of lipoproteins in the outer membrane after they are released by the LolA protein. The polypeptide is Outer-membrane lipoprotein LolB (Shewanella frigidimarina (strain NCIMB 400)).